Reading from the N-terminus, the 174-residue chain is uncharacterized protein (174 aa).

Transmembrane regions (helical) follow at residues 29 to 51 (FAVELIPAINYFIFVGLCFGFWY) and 66 to 83 (VIVIFGIPFFLTMLVTKI).

The protein resides in the cell membrane. This is an uncharacterized protein from Bacillus subtilis (strain 168).